We begin with the raw amino-acid sequence, 1303 residues long: Protein STU1 (1303 aa).

3 disordered regions span residues 239 to 259, 531 to 664, and 953 to 977; these read RGSD…NTPV, SQRE…GAVS, and EASD…NSEH. Residues 249 to 259 are compositionally biased toward polar residues; that stretch reads RANTPRSNTPV. Basic and acidic residues predominate over residues 554-568; sequence SLKEAILEKNKELRQ. Polar residues predominate over residues 573 to 583; the sequence is SRNSGEQSTKI. The segment covering 596 to 609 has biased composition (basic and acidic residues); that stretch reads SRLEKSLLRPDVGH. The span at 618-629 shows a compositional bias: polar residues; it reads SSWTYPSTQSGP. A compositionally biased stretch (basic and acidic residues) spans 634 to 648; sequence KQRERSKTEVHKKSP. Polar residues-rich tracts occupy residues 653–664 and 955–972; these read RPSSRLDTGAVS and SDSS…SSKR.

Belongs to the CLASP family. Interacts with microtubules.

It localises to the cytoplasm. The protein localises to the cytoskeleton. The protein resides in the nucleus. It is found in the spindle. Its function is as follows. Microtubule binding protein that promotes the stabilization of dynamic microtubules. Required for mitotic spindle formation. This Candida albicans (strain SC5314 / ATCC MYA-2876) (Yeast) protein is Protein STU1 (STU1).